The primary structure comprises 299 residues: Taste receptor type 2 member 42 (299 aa).

The Extracellular segment spans residues 1-7 (MATELDK). Residues 8–28 (IFLILAIAEFIISMLGNVFIG) form a helical membrane-spanning segment. The Cytoplasmic portion of the chain corresponds to 29–50 (LVNCSEGIKNQKVFSSDFILTS). Residues 51 to 71 (LAISTIGQLLVILFDSFLVGL) form a helical membrane-spanning segment. The Extracellular segment spans residues 72–101 (ASHLYTTYRLGKPVIMLWHMTNHLTTWLAT). Residues 102-122 (CLSVFYFFKIAHFPHSLFLWL) traverse the membrane as a helical segment. Residues 123–127 (RWRMN) lie on the Cytoplasmic side of the membrane. The helical transmembrane segment at 128–148 (GMIAMLLILSLFLLIFDSSVL) threads the bilayer. At 149–187 (EIFIDISLNIIDKSSLTLYLDESKTLYDKLSILKTLLSL) the chain is on the extracellular side. The chain crosses the membrane as a helical span at residues 188 to 208 (TSFIPFSLSLTSVLFLYLSLV). Topologically, residues 209-238 (RHTRNLKLSSLGSRDSSTEAHRRAMKMVMS) are cytoplasmic. The chain crosses the membrane as a helical span at residues 239-259 (FLFLFIVHFFSLQVANWIFFM). Topologically, residues 260-265 (LWNNKY) are extracellular. A helical membrane pass occupies residues 266–286 (IKFVMLALNAFPSCHSFILIL). Residues 287 to 299 (GNSKLRQTAVRLL) are Cytoplasmic-facing.

Belongs to the G-protein coupled receptor T2R family.

Its subcellular location is the membrane. Its function is as follows. Receptor that may play a role in the perception of bitterness and is gustducin-linked. May play a role in sensing the chemical composition of the gastrointestinal content. The activity of this receptor may stimulate alpha gustducin, mediate PLC-beta-2 activation and lead to the gating of TRPM5. The chain is Taste receptor type 2 member 42 (TAS2R42) from Gorilla gorilla gorilla (Western lowland gorilla).